Here is a 180-residue protein sequence, read N- to C-terminus: Oligoribonuclease (180 aa).

The region spanning 7 to 170 is the Exonuclease domain; that stretch reads LIWIDLEMTG…DDIRESIAEL (164 aa). Y128 is a catalytic residue.

This sequence belongs to the oligoribonuclease family.

It is found in the cytoplasm. Functionally, 3'-to-5' exoribonuclease specific for small oligoribonucleotides. The sequence is that of Oligoribonuclease from Pseudomonas fluorescens (strain Pf0-1).